The chain runs to 364 residues: Abhydrolase domain-containing protein C57A10.08c (364 aa).

The Cytoplasmic segment spans residues 1 to 8; the sequence is MYFFTISR. A helical; Signal-anchor for type II membrane protein transmembrane segment spans residues 9–29; the sequence is LTSFISYGILGALGILTFLYL. Topologically, residues 30 to 364 are lumenal; the sequence is YDAYLAKSFQ…DKFSTTDHNI (335 aa). Serine 183 serves as the catalytic Charge relay system. Asparagine 326 carries an N-linked (GlcNAc...) asparagine glycan. The active-site Charge relay system is the histidine 336.

It belongs to the AB hydrolase superfamily.

Its subcellular location is the endoplasmic reticulum membrane. This chain is Abhydrolase domain-containing protein C57A10.08c, found in Schizosaccharomyces pombe (strain 972 / ATCC 24843) (Fission yeast).